We begin with the raw amino-acid sequence, 428 residues long: C4-dicarboxylate transport protein (428 aa).

The next 8 helical transmembrane spans lie at 8–28 (SLYF…HFYP), 44–64 (LIKM…IAGM), 76–96 (VALL…LIIV), 142–162 (IGAF…LFGF), 184–204 (VIFG…FGAM), 222–242 (LIIC…GSIA), 326–346 (IVHQ…AAGV), and 352–372 (IVLA…LALI).

This sequence belongs to the dicarboxylate/amino acid:cation symporter (DAACS) (TC 2.A.23) family.

It localises to the cell inner membrane. In terms of biological role, responsible for the transport of dicarboxylates such as succinate, fumarate, and malate from the periplasm across the membrane. This chain is C4-dicarboxylate transport protein, found in Escherichia coli O127:H6 (strain E2348/69 / EPEC).